Here is a 570-residue protein sequence, read N- to C-terminus: Sulfite reductase [NADPH] hemoprotein beta-component (570 aa).

[4Fe-4S] cluster contacts are provided by cysteine 434, cysteine 440, cysteine 479, and cysteine 483. Cysteine 483 provides a ligand contact to siroheme.

Belongs to the nitrite and sulfite reductase 4Fe-4S domain family. In terms of assembly, alpha(8)-beta(8). The alpha component is a flavoprotein, the beta component is a hemoprotein. The cofactor is siroheme. [4Fe-4S] cluster is required as a cofactor.

It carries out the reaction hydrogen sulfide + 3 NADP(+) + 3 H2O = sulfite + 3 NADPH + 4 H(+). It functions in the pathway sulfur metabolism; hydrogen sulfide biosynthesis; hydrogen sulfide from sulfite (NADPH route): step 1/1. Functionally, component of the sulfite reductase complex that catalyzes the 6-electron reduction of sulfite to sulfide. This is one of several activities required for the biosynthesis of L-cysteine from sulfate. The sequence is that of Sulfite reductase [NADPH] hemoprotein beta-component from Salmonella schwarzengrund (strain CVM19633).